We begin with the raw amino-acid sequence, 367 residues long: Undecaprenyl-phosphate alpha-N-acetylglucosaminyl 1-phosphate transferase (367 aa).

A run of 9 helical transmembrane segments spans residues 3-23 (LLTA…FIFL), 45-65 (GVIP…MFGL), 69-89 (YIPH…VGAM), 129-149 (WELV…WAAI), 158-178 (IDGL…LILW), 187-207 (MWCF…LGIL), 213-233 (VFMG…LLLE), 242-262 (ISPV…VAIM), and 318-338 (VPEW…GYCI).

It belongs to the glycosyltransferase 4 family. WecA subfamily. Mg(2+) is required as a cofactor. The cofactor is Mn(2+).

It localises to the cell inner membrane. The catalysed reaction is di-trans,octa-cis-undecaprenyl phosphate + UDP-N-acetyl-alpha-D-glucosamine = N-acetyl-alpha-D-glucosaminyl-di-trans,octa-cis-undecaprenyl diphosphate + UMP. Its pathway is bacterial outer membrane biogenesis; LPS O-antigen biosynthesis. It participates in bacterial outer membrane biogenesis; enterobacterial common antigen biosynthesis. With respect to regulation, inhibited by tunicamycin. Functionally, catalyzes the transfer of the GlcNAc-1-phosphate moiety from UDP-GlcNAc onto the carrier lipid undecaprenyl phosphate (C55-P), yielding GlcNAc-pyrophosphoryl-undecaprenyl (GlcNAc-PP-C55). This is Undecaprenyl-phosphate alpha-N-acetylglucosaminyl 1-phosphate transferase from Salmonella typhimurium (strain LT2 / SGSC1412 / ATCC 700720).